Reading from the N-terminus, the 482-residue chain is Aspartyl/glutamyl-tRNA(Asn/Gln) amidotransferase subunit B (482 aa).

This sequence belongs to the GatB/GatE family. GatB subfamily. Heterotrimer of A, B and C subunits.

It catalyses the reaction L-glutamyl-tRNA(Gln) + L-glutamine + ATP + H2O = L-glutaminyl-tRNA(Gln) + L-glutamate + ADP + phosphate + H(+). The enzyme catalyses L-aspartyl-tRNA(Asn) + L-glutamine + ATP + H2O = L-asparaginyl-tRNA(Asn) + L-glutamate + ADP + phosphate + 2 H(+). Its function is as follows. Allows the formation of correctly charged Asn-tRNA(Asn) or Gln-tRNA(Gln) through the transamidation of misacylated Asp-tRNA(Asn) or Glu-tRNA(Gln) in organisms which lack either or both of asparaginyl-tRNA or glutaminyl-tRNA synthetases. The reaction takes place in the presence of glutamine and ATP through an activated phospho-Asp-tRNA(Asn) or phospho-Glu-tRNA(Gln). The polypeptide is Aspartyl/glutamyl-tRNA(Asn/Gln) amidotransferase subunit B (Azotobacter vinelandii (strain DJ / ATCC BAA-1303)).